Reading from the N-terminus, the 445-residue chain is Acyl-lipid (7-3)-desaturase (445 aa).

The Cytochrome b5 heme-binding domain maps to 11–91; the sequence is VAELRAAEVA…MSKFFVGSLD (81 aa). The heme site is built by His50 and His73. A run of 2 helical transmembrane segments spans residues 126-146 and 148-168; these read YWLK…YMLL and GKTL…GLNI. Positions 170–174 match the Histidine box-1 motif; that stretch reads HDANH. Positions 205–210 match the Histidine box-2 motif; the sequence is HVVMHH. 3 helical membrane passes run 247-267, 283-303, and 312-332; these read ILPG…LELL, LFAP…ALPL, and ALCI…FFFI. Residues 380–384 carry the Histidine box-3 motif; sequence QIEHH.

The protein belongs to the fatty acid desaturase type 1 family. It depends on Fe(2+) as a cofactor.

It is found in the membrane. It catalyses the reaction a (7Z,10Z,13Z,16Z,19Z)-docosapentaenoyl-containing glycerolipid + 2 Fe(II)-[cytochrome b5] + O2 + 2 H(+) = a (4Z,7Z,10Z,13Z,16Z,19Z)-docosahexaenoyl-containing glycerolipid + 2 Fe(III)-[cytochrome b5] + 2 H2O. The enzyme catalyses a (7Z,10Z,13Z,16Z)-docosatetraenoyl-containing glycerolipid + 2 Fe(II)-[cytochrome b5] + O2 + 2 H(+) = a (4Z,7Z,10Z,13Z,16Z)-docosapentaenoyl-containing glycerolipid + 2 Fe(III)-[cytochrome b5] + 2 H2O. Its function is as follows. Fatty acid desaturase that introduces a cis double bond at the 4-position in 22-carbon polyunsaturated fatty acids that contain a Delta(7) double bond, resulting in the production of delta-4 desaturated fatty acid docosahexanoic acid (DHA). Mediates desaturation of 22:5n-3 and 22:4n-6 into 22:6n-3 and 22:5n-6 respectively. In Diacronema lutheri (Unicellular marine alga), this protein is Acyl-lipid (7-3)-desaturase.